Reading from the N-terminus, the 335-residue chain is Abasic site processing protein HMCES (335 aa).

Cys2 functions as the Nucleophile in the catalytic mechanism. Residue Cys2 is modified to Thiazolidine linkage to a ring-opened DNA abasic site. Basic and acidic residues predominate over residues 24 to 39; it reads QGGRKWPNWRDGDSDK. Positions 24 to 51 are disordered; sequence QGGRKWPNWRDGDSDKYQPSYNKSPQSN. The segment covering 40 to 51 has biased composition (polar residues); that stretch reads YQPSYNKSPQSN. The active site involves Glu129. The tract at residues 284-335 is disordered; sequence LQNKSPKKEESHSIQSPKLSQFGAPPKKTSAGLMQQWLKKEDGEPSPKRAKK. Residues 321 to 335 show a composition bias toward basic and acidic residues; sequence LKKEDGEPSPKRAKK.

Belongs to the SOS response-associated peptidase family. Post-translationally, ubiquitination of the hmces DNA-protein cross-link by rfwd3 may promotes its degradation.

The protein resides in the chromosome. Its activity is regulated as follows. Formation and reversal of DNA-protein cross-link depends on DNA context. Catalyzes formation of the thiazolidine linkage in presence of abasic sites in single-stranded DNA. Mediates the reversal of the thiazolidine cross-link in presence of double stranded DNA. Its function is as follows. Sensor of abasic sites in single-stranded DNA (ssDNA) required to preserve genome integrity by promoting error-free repair of abasic sites. Acts as an enzyme that recognizes and binds abasic sites in ssDNA at replication forks and chemically modifies the lesion by forming a covalent cross-link with DNA: forms a stable thiazolidine linkage between a ring-opened abasic site and the alpha-amino and sulfhydryl substituents of its N-terminal catalytic cysteine residue. The hmces DNA-protein cross-link is then either reversed or degraded. Hmces is able to catalyze the reversal of its thiazolidine cross-link and cycle between a cross-link and a non-cross-linked state depending on DNA context: mediates self-reversal of the thiazolidine cross-link in double stranded DNA, allowing apex1 to initiate downstream repair of abasic sites. The hmces DNA-protein cross-link can also be degraded by the sprtn metalloprotease following unfolding by the brip1/fancj helicase. Promotes error-free repair of abasic sites by protecting abasic sites from translesion synthesis (TLS) polymerases and endonucleases that are error-prone and would generate mutations and double-strand breaks. Acts as a protease: mediates autocatalytic processing of its N-terminal methionine in order to expose the catalytic cysteine. The hmces DNA-protein cross-link is then either reversed or degraded. According to a model, the HMCES DNA-protein cross-link. In Xenopus tropicalis (Western clawed frog), this protein is Abasic site processing protein HMCES.